The following is an 882-amino-acid chain: Leucine--tRNA ligase (882 aa).

Residues 43-53 (PYPSGNLHMGH) carry the 'HIGH' region motif. The short motif at 632-636 (TMSKS) is the 'KMSKS' region element. Lys635 is an ATP binding site.

The protein belongs to the class-I aminoacyl-tRNA synthetase family.

The protein resides in the cytoplasm. It catalyses the reaction tRNA(Leu) + L-leucine + ATP = L-leucyl-tRNA(Leu) + AMP + diphosphate. In Synechococcus sp. (strain JA-2-3B'a(2-13)) (Cyanobacteria bacterium Yellowstone B-Prime), this protein is Leucine--tRNA ligase.